The primary structure comprises 92 residues: Neuropeptide ShK-like2 (92 aa).

The signal sequence occupies residues 1–23 (MTTIRCVLFAVLLFAYCALLIKA). The propeptide occupies 24–51 (RSIDAEAEKTWQEEETKTVAEKSPLKKR). Cystine bridges form between cysteine 53-cysteine 92, cysteine 61-cysteine 85, and cysteine 70-cysteine 89.

As to expression, transcripts are first expressed mostly in the endoderm (with rare ectodermal cells) in the late planulae. They are mostly expressed in endodermal ganglion cells in the body column and tentacles in primary polyps, as well as in a small number of ectodermal sensory neurons in tentacles and body wall. They are not expressed in nematocytes. Transcripts are predominantly expressed in ectodermal sensory neurons in early and late planulae. They are expressed in endodermal ganglion cells in the body column and tentacles in primary polyps, as well as in a small number of ectodermal neurons in pharynx. They are not expressed in nematocytes.

Functionally, in vivo, this neuropeptide induces contraction paralysis followed by death (within 2 hours) on 4 zebrafish larvae on the 15 tested. Also induces body contraction in Nematostella 11-dpf polyps. The protein is Neuropeptide ShK-like2 of Nematostella vectensis (Starlet sea anemone).